We begin with the raw amino-acid sequence, 525 residues long: GMP synthase [glutamine-hydrolyzing] (525 aa).

The region spanning 9–207 is the Glutamine amidotransferase type-1 domain; that stretch reads RILILDFGSQ…VRDICQCEAL (199 aa). C86 (nucleophile) is an active-site residue. Residues H181 and E183 contribute to the active site. Positions 208 to 400 constitute a GMPS ATP-PPase domain; the sequence is WTPAKIIDDA…LGLPYDMLYR (193 aa). An ATP-binding site is contributed by 235-241; it reads SGGVDSS.

As to quaternary structure, homodimer.

The catalysed reaction is XMP + L-glutamine + ATP + H2O = GMP + L-glutamate + AMP + diphosphate + 2 H(+). It participates in purine metabolism; GMP biosynthesis; GMP from XMP (L-Gln route): step 1/1. In terms of biological role, catalyzes the synthesis of GMP from XMP. The polypeptide is GMP synthase [glutamine-hydrolyzing] (Klebsiella pneumoniae subsp. pneumoniae (strain ATCC 700721 / MGH 78578)).